Reading from the N-terminus, the 139-residue chain is Nucleoside diphosphate kinase (139 aa).

Positions 10, 58, 86, 92, 103, and 113 each coordinate ATP. Catalysis depends on H116, which acts as the Pros-phosphohistidine intermediate.

It belongs to the NDK family. Homotetramer. Mg(2+) is required as a cofactor.

The protein resides in the cytoplasm. The enzyme catalyses a 2'-deoxyribonucleoside 5'-diphosphate + ATP = a 2'-deoxyribonucleoside 5'-triphosphate + ADP. It carries out the reaction a ribonucleoside 5'-diphosphate + ATP = a ribonucleoside 5'-triphosphate + ADP. Major role in the synthesis of nucleoside triphosphates other than ATP. The ATP gamma phosphate is transferred to the NDP beta phosphate via a ping-pong mechanism, using a phosphorylated active-site intermediate. This is Nucleoside diphosphate kinase from Oleidesulfovibrio alaskensis (strain ATCC BAA-1058 / DSM 17464 / G20) (Desulfovibrio alaskensis).